Here is a 195-residue protein sequence, read N- to C-terminus: Myelin basic protein (195 aa).

At A2 the chain carries N-acetylalanine. Residues S8 and S13 each carry the phosphoserine modification. At Y15 the chain carries Phosphotyrosine. Phosphothreonine is present on T18. S20 is subject to Phosphoserine. T21 carries the post-translational modification Phosphothreonine. A citrulline mark is found at R26 and R32. Phosphothreonine is present on T36. A Phosphoserine modification is found at S41. An omega-N-methylarginine mark is found at R44 and R50. Residues 45–79 form a disordered region; that stretch reads FFSGDRGAPKRGSGKVPWLKQSRSPLPSHARSRPG. S57 carries the phosphoserine modification. Residue T92 is modified to Phosphothreonine. Phosphotyrosine is present on Y94. S101 is modified (phosphoserine). 3 positions are modified to phosphothreonine: T104, T119, and T122. The disordered stretch occupies residues 117–139; sequence IVTPRTPPPSQGKGRGLSLSRFS. Residue Q127 is modified to Deamidated glutamine. At R131 the chain carries Omega-N-methylarginine; alternate. The residue at position 131 (R131) is a Symmetric dimethylarginine; alternate. S139 is modified (phosphoserine). The residue at position 146 (K146) is an N6-acetyllysine. R154 carries the post-translational modification Citrulline. A Deamidated glutamine modification is found at Q172. A Citrulline modification is found at R184. The residue at position 186 (S186) is a Phosphoserine. S190 bears the Phosphoserine; by UHMK1 mark. Residue R195 is modified to Citrulline.

This sequence belongs to the myelin basic protein family. Homodimer. Post-translationally, as in other animals, several charge isomers may be produced as a result of optional post-translational modifications, such as phosphorylation of serine or threonine residues, deamidation of glutamine or asparagine residues, citrullination and methylation of arginine residues. Arg-131 was found to be 44% monomethylated and 11% symmetrically dimethylated. In terms of processing, phosphorylated by TAOK2, VRK2, MAPK11, MAPK12, MAPK14 and MINK1. Post-translationally, proteolytically cleaved in B cell lysosomes by cathepsin CTSG which degrades the major immunogenic MBP epitope and prevents the activation of MBP-specific autoreactive T cells. As to expression, found in both the central and the peripheral nervous system.

It is found in the myelin membrane. In terms of biological role, is, with PLP, the most abundant protein component of the myelin membrane in the CNS. Has a role in both the formation and stabilization of this compact multilayer arrangement of bilayers. Each splice variant and charge isomer may have a specialized function in the assembly of an optimized, biochemically functional myelin membrane. The chain is Myelin basic protein (Mbp) from Rattus norvegicus (Rat).